The chain runs to 345 residues: Tyrosine--tRNA ligase (345 aa).

Tyr-36 contributes to the L-tyrosine binding site. Residues 41–49 (PTGEMHIGH) carry the 'HIGH' region motif. Residues Tyr-163, Gln-167, Asp-170, and Gln-185 each contribute to the L-tyrosine site.

The protein belongs to the class-I aminoacyl-tRNA synthetase family. TyrS type 3 subfamily. As to quaternary structure, homodimer.

It is found in the cytoplasm. It carries out the reaction tRNA(Tyr) + L-tyrosine + ATP = L-tyrosyl-tRNA(Tyr) + AMP + diphosphate + H(+). Catalyzes the attachment of tyrosine to tRNA(Tyr) in a two-step reaction: tyrosine is first activated by ATP to form Tyr-AMP and then transferred to the acceptor end of tRNA(Tyr). This chain is Tyrosine--tRNA ligase, found in Natronomonas pharaonis (strain ATCC 35678 / DSM 2160 / CIP 103997 / JCM 8858 / NBRC 14720 / NCIMB 2260 / Gabara) (Halobacterium pharaonis).